A 569-amino-acid polypeptide reads, in one-letter code: 4-hydroxy-7-methoxy-3-oxo-3,4-dihydro-2H-1,4-benzoxazin-2-yl glucoside beta-D-glucosidase 1b, chloroplastic (569 aa).

Residues 1 to 50 (MALLAAATLNPTTHLSLRSRAGRNSENLWLRSTASSQKSKGRFCNLTIRA) constitute a chloroplast transit peptide. Residues Gln-92, His-194, and 239–240 (NE) contribute to the a beta-D-glucoside site. Glu-240 serves as the catalytic Proton donor. A disulfide bridge links Cys-259 with Cys-265. A beta-D-glucoside contacts are provided by residues Tyr-383, Glu-456, Trp-504, 511 to 512 (EW), and Phe-520. The active-site Nucleophile is Glu-456.

Belongs to the glycosyl hydrolase 1 family. Homo- and heterohexamers. Expressed in young seedlings early after germination.

The protein localises to the plastid. It is found in the chloroplast. The catalysed reaction is Hydrolysis of terminal, non-reducing beta-D-glucosyl residues with release of beta-D-glucose.. It catalyses the reaction DIMBOA beta-D-glucoside + H2O = DIMBOA + D-glucose. It carries out the reaction DIBOA beta-D-glucoside + H2O = DIBOA + D-glucose. In terms of biological role, acts in defense of young plant parts against pests via the production of hydroxamic acids from hydroxamic acid glucosides. Enzymatic activity is highly correlated with plant growth. The preferred substrate is DIMBOA-beta-D-glucoside. In Triticum aestivum (Wheat), this protein is 4-hydroxy-7-methoxy-3-oxo-3,4-dihydro-2H-1,4-benzoxazin-2-yl glucoside beta-D-glucosidase 1b, chloroplastic (GLU1B).